The primary structure comprises 90 residues: Co-chaperonin GroES (90 aa).

The protein belongs to the GroES chaperonin family. As to quaternary structure, heptamer of 7 subunits arranged in a ring. Interacts with the chaperonin GroEL.

It is found in the cytoplasm. Its function is as follows. Together with the chaperonin GroEL, plays an essential role in assisting protein folding. The GroEL-GroES system forms a nano-cage that allows encapsulation of the non-native substrate proteins and provides a physical environment optimized to promote and accelerate protein folding. GroES binds to the apical surface of the GroEL ring, thereby capping the opening of the GroEL channel. The sequence is that of Co-chaperonin GroES from Helicobacter hepaticus (strain ATCC 51449 / 3B1).